We begin with the raw amino-acid sequence, 254 residues long: Trans-aconitate 2-methyltransferase (254 aa).

Belongs to the methyltransferase superfamily. Tam family.

Its subcellular location is the cytoplasm. It carries out the reaction trans-aconitate + S-adenosyl-L-methionine = (E)-3-(methoxycarbonyl)pent-2-enedioate + S-adenosyl-L-homocysteine. Its function is as follows. Catalyzes the S-adenosylmethionine monomethyl esterification of trans-aconitate. The polypeptide is Trans-aconitate 2-methyltransferase (Rhodococcus jostii (strain RHA1)).